The following is a 416-amino-acid chain: Lipase (416 aa).

A signal peptide spans methionine 1–alanine 28. The active-site Nucleophile is serine 141. Glycine 314 contacts Ca(2+). The Charge relay system role is filled by aspartate 345. Aspartate 385 lines the Ca(2+) pocket. The Charge relay system role is filled by histidine 386. Ca(2+) is bound by residues glutamate 388, aspartate 393, and proline 394.

This sequence belongs to the AB hydrolase superfamily. As to quaternary structure, homodimer.

It is found in the secreted. The enzyme catalyses a triacylglycerol + H2O = a diacylglycerol + a fatty acid + H(+). With respect to regulation, activity is inhibited by zinc and iron ions, and activated in vitro in 25% v/v DMSO and acetone. Triacylglycerol hydrolase that shows hydrolysis preference towards some of the natural oils such as olive, sunflower and corn oils. This Bacillus sp protein is Lipase.